A 211-amino-acid polypeptide reads, in one-letter code: Ras-related protein rab-11.1 (211 aa).

Residue Gly18 to Asn26 coordinates GTP. Positions Ser40–Phe48 match the Effector region motif. Residues Asp66 to Gln70, Asn124 to Asp127, and Ser154 to Leu156 contribute to the GTP site. The interval Gly187–Pro211 is disordered. 2 S-geranylgeranyl cysteine lipidation sites follow: Cys208 and Cys209.

Belongs to the small GTPase superfamily. Rab family. As to quaternary structure, interacts with rei-1 and rei-2. The GDP-form preferentially binds to rei-1 and rei-2. As to expression, expressed weakly in sperm, but more predominantly in oocytes. Expressed in the intestine.

Its subcellular location is the cytoplasmic vesicle. It localises to the secretory vesicle. It is found in the endosome. The protein localises to the cytoplasm. The protein resides in the cytoskeleton. Its subcellular location is the spindle. It localises to the microtubule organizing center. It is found in the spindle pole body. The protein localises to the centrosome. The protein resides in the apical cell membrane. Its subcellular location is the cytosol. It localises to the recycling endosome membrane. It is found in the golgi apparatus membrane. The protein localises to the cytoplasmic granule. Its function is as follows. The small GTPases Rab are key regulators of intracellular membrane trafficking, from the formation of transport vesicles to their fusion with membranes. Rabs cycle between an inactive GDP-bound form and an active GTP-bound form that is able to recruit to membranes different set of downstream effectors directly responsible for vesicle formation, movement, tethering and fusion. Involved in regulating the meiotic maturation of oocytes. Plays a role in egg shell formation, regulating exocytosis of chondroitin proteoglycans following fertilization. Controls cortical granule localization and targets them to the plasma membrane for exocytosis. Acts as a major regulator of membrane delivery during cytokinesis. Regulates the cytoskeleton by facilitating astral microtubule elongation and organization during metaphase to ensure proper spindle alignment and polarity in the first embryonic cell division. Maintains normal endoplasmic reticulum morphology during metaphase. Involved in vesicle formation and plasma membrane repair following exposure to pore forming toxins. Regulates endocytic recycling. May play a role in yolk receptor endocytosis in growing oocytes. Plays a role in the shedding of pathogen spores from intestinal cells via its involvement in spore fusion and endocytic trafficking. The sequence is that of Ras-related protein rab-11.1 from Caenorhabditis elegans.